A 118-amino-acid polypeptide reads, in one-letter code: Large ribosomal subunit protein bL20 (118 aa).

This sequence belongs to the bacterial ribosomal protein bL20 family.

Binds directly to 23S ribosomal RNA and is necessary for the in vitro assembly process of the 50S ribosomal subunit. It is not involved in the protein synthesizing functions of that subunit. The sequence is that of Large ribosomal subunit protein bL20 from Bacillus mycoides (strain KBAB4) (Bacillus weihenstephanensis).